We begin with the raw amino-acid sequence, 360 residues long: Phospho-N-acetylmuramoyl-pentapeptide-transferase (360 aa).

A run of 10 helical transmembrane segments spans residues 26–46, 72–92, 94–114, 132–152, 168–188, 199–219, 236–256, 263–283, 288–308, and 338–358; these read AIVS…RMIA, PTMG…LWAY, SNPY…VGFV, WKYF…YMIG, VMPQ…VGTS, GLAI…AWAT, AGEL…FLWF, VFMG…IAVL, FLLV…ILQV, and VIVR…ATLK.

The protein belongs to the glycosyltransferase 4 family. MraY subfamily. Mg(2+) is required as a cofactor.

It is found in the cell inner membrane. It catalyses the reaction UDP-N-acetyl-alpha-D-muramoyl-L-alanyl-gamma-D-glutamyl-meso-2,6-diaminopimeloyl-D-alanyl-D-alanine + di-trans,octa-cis-undecaprenyl phosphate = di-trans,octa-cis-undecaprenyl diphospho-N-acetyl-alpha-D-muramoyl-L-alanyl-D-glutamyl-meso-2,6-diaminopimeloyl-D-alanyl-D-alanine + UMP. It functions in the pathway cell wall biogenesis; peptidoglycan biosynthesis. Functionally, catalyzes the initial step of the lipid cycle reactions in the biosynthesis of the cell wall peptidoglycan: transfers peptidoglycan precursor phospho-MurNAc-pentapeptide from UDP-MurNAc-pentapeptide onto the lipid carrier undecaprenyl phosphate, yielding undecaprenyl-pyrophosphoryl-MurNAc-pentapeptide, known as lipid I. The polypeptide is Phospho-N-acetylmuramoyl-pentapeptide-transferase (Erwinia tasmaniensis (strain DSM 17950 / CFBP 7177 / CIP 109463 / NCPPB 4357 / Et1/99)).